A 214-amino-acid polypeptide reads, in one-letter code: Cytochrome c biogenesis ATP-binding export protein CcmA (214 aa).

Residues 16-212 form the ABC transporter domain; sequence LRVSGLSLSR…PDAKRIDLGA (197 aa). 48-55 is a binding site for ATP; that stretch reads GPNGTGKT.

This sequence belongs to the ABC transporter superfamily. CcmA exporter (TC 3.A.1.107) family. The complex is composed of two ATP-binding proteins (CcmA) and two transmembrane proteins (CcmB).

The protein localises to the cell inner membrane. It carries out the reaction heme b(in) + ATP + H2O = heme b(out) + ADP + phosphate + H(+). In terms of biological role, part of the ABC transporter complex CcmAB involved in the biogenesis of c-type cytochromes; once thought to export heme, this seems not to be the case, but its exact role is uncertain. Responsible for energy coupling to the transport system. The polypeptide is Cytochrome c biogenesis ATP-binding export protein CcmA (Maricaulis maris (strain MCS10) (Caulobacter maris)).